The following is a 377-amino-acid chain: Putative glutamate--cysteine ligase 2 (377 aa).

Belongs to the glutamate--cysteine ligase type 2 family. YbdK subfamily.

The catalysed reaction is L-cysteine + L-glutamate + ATP = gamma-L-glutamyl-L-cysteine + ADP + phosphate + H(+). Its function is as follows. ATP-dependent carboxylate-amine ligase which exhibits weak glutamate--cysteine ligase activity. This chain is Putative glutamate--cysteine ligase 2, found in Ralstonia pickettii (strain 12J).